Reading from the N-terminus, the 104-residue chain is DNA-binding transcriptional repressor TubR (104 aa).

2 DNA-binding regions (HTH) span residues 43 to 50 (KTAVAEMI) and 54 to 65 (KPTVFATVNSFY).

As to quaternary structure, homodimer. Binds to tubC DNA, the TubR-DNA complex binds to TubZ.

Functionally, a DNA-binding protein that is part of the type III plasmid partition system used to ensure correct segregation of the pBtoxis plasmid. Cooperatively binds to the centromere-like site (tubC), which may seed filament formation by the TubZ polymerizing GTPase, stabilizing TubZ filaments. TubR-tubC complexes track the depolymerizing minus end of the filament, probably pulling plasmid within the cell. Required for plasmid replication. Negatively regulates levels of TubZ; its effect on RNA expression has not been shown. Specifically binds iterons, 12-bp imperfect direct repeats that function as a plasmid origin of replication. Four TubR dimers bind to tubC, forming an extended bent DNA-protein filament with protein wrapping helically around the outside of the DNA. This chain is DNA-binding transcriptional repressor TubR, found in Bacillus thuringiensis subsp. israelensis.